The sequence spans 346 residues: Holliday junction branch migration complex subunit RuvB (346 aa).

The interval 1–182 (MSEPARLISP…FGIPVRLSFY (182 aa)) is large ATPase domain (RuvB-L). ATP contacts are provided by residues L21, R22, G63, K66, T67, T68, 129–131 (EDF), R172, Y182, and R219. A Mg(2+)-binding site is contributed by T67. The segment at 183 to 253 (TVEELELIVR…IADEALTRLL (71 aa)) is small ATPAse domain (RuvB-S). The head domain (RuvB-H) stretch occupies residues 256–346 (NVGFDQLDKR…AQFRLFQEDD (91 aa)). The DNA site is built by R292, R311, and R316.

The protein belongs to the RuvB family. Homohexamer. Forms an RuvA(8)-RuvB(12)-Holliday junction (HJ) complex. HJ DNA is sandwiched between 2 RuvA tetramers; dsDNA enters through RuvA and exits via RuvB. An RuvB hexamer assembles on each DNA strand where it exits the tetramer. Each RuvB hexamer is contacted by two RuvA subunits (via domain III) on 2 adjacent RuvB subunits; this complex drives branch migration. In the full resolvosome a probable DNA-RuvA(4)-RuvB(12)-RuvC(2) complex forms which resolves the HJ.

It is found in the cytoplasm. The catalysed reaction is ATP + H2O = ADP + phosphate + H(+). Functionally, the RuvA-RuvB-RuvC complex processes Holliday junction (HJ) DNA during genetic recombination and DNA repair, while the RuvA-RuvB complex plays an important role in the rescue of blocked DNA replication forks via replication fork reversal (RFR). RuvA specifically binds to HJ cruciform DNA, conferring on it an open structure. The RuvB hexamer acts as an ATP-dependent pump, pulling dsDNA into and through the RuvAB complex. RuvB forms 2 homohexamers on either side of HJ DNA bound by 1 or 2 RuvA tetramers; 4 subunits per hexamer contact DNA at a time. Coordinated motions by a converter formed by DNA-disengaged RuvB subunits stimulates ATP hydrolysis and nucleotide exchange. Immobilization of the converter enables RuvB to convert the ATP-contained energy into a lever motion, pulling 2 nucleotides of DNA out of the RuvA tetramer per ATP hydrolyzed, thus driving DNA branch migration. The RuvB motors rotate together with the DNA substrate, which together with the progressing nucleotide cycle form the mechanistic basis for DNA recombination by continuous HJ branch migration. Branch migration allows RuvC to scan DNA until it finds its consensus sequence, where it cleaves and resolves cruciform DNA. This chain is Holliday junction branch migration complex subunit RuvB, found in Rhizobium etli (strain CIAT 652).